An 858-amino-acid polypeptide reads, in one-letter code: Protein translocase subunit SecA (858 aa).

ATP contacts are provided by residues glutamine 85, 103–107 (GEGKT), and aspartate 511. Residues cysteine 840, cysteine 842, cysteine 851, and cysteine 852 each contribute to the Zn(2+) site.

This sequence belongs to the SecA family. Monomer and homodimer. Part of the essential Sec protein translocation apparatus which comprises SecA, SecYEG and auxiliary proteins SecDF. Other proteins may also be involved. It depends on Zn(2+) as a cofactor.

It is found in the cell membrane. It localises to the cytoplasm. The enzyme catalyses ATP + H2O + cellular proteinSide 1 = ADP + phosphate + cellular proteinSide 2.. Part of the Sec protein translocase complex. Interacts with the SecYEG preprotein conducting channel. Has a central role in coupling the hydrolysis of ATP to the transfer of proteins into and across the cell membrane, serving as an ATP-driven molecular motor driving the stepwise translocation of polypeptide chains across the membrane. In Lachnoclostridium phytofermentans (strain ATCC 700394 / DSM 18823 / ISDg) (Clostridium phytofermentans), this protein is Protein translocase subunit SecA.